The following is a 73-amino-acid chain: MAKDEIIEFEGEVIDTLPNTLFKVRLENGHEIIAHISGKMRKHYIRILTGDKVKVEMTPYDLSKGRITYRGKN.

Residues 1-72 (MAKDEIIEFE…SKGRITYRGK (72 aa)) enclose the S1-like domain.

The protein belongs to the IF-1 family. In terms of assembly, component of the 30S ribosomal translation pre-initiation complex which assembles on the 30S ribosome in the order IF-2 and IF-3, IF-1 and N-formylmethionyl-tRNA(fMet); mRNA recruitment can occur at any time during PIC assembly.

It localises to the cytoplasm. Its function is as follows. One of the essential components for the initiation of protein synthesis. Stabilizes the binding of IF-2 and IF-3 on the 30S subunit to which N-formylmethionyl-tRNA(fMet) subsequently binds. Helps modulate mRNA selection, yielding the 30S pre-initiation complex (PIC). Upon addition of the 50S ribosomal subunit IF-1, IF-2 and IF-3 are released leaving the mature 70S translation initiation complex. The polypeptide is Translation initiation factor IF-1 (Psychrobacter arcticus (strain DSM 17307 / VKM B-2377 / 273-4)).